A 660-amino-acid polypeptide reads, in one-letter code: MPPGGSGQGGCPRRPPALAGPLPPPPPPPPLPLLLGLLLLLGAAEGARVSSSLSTTHHVHHFHSKHGTVPIAINRMPFLTRSGHAGTTYIFGKGGALITYTWPPNDRPSTRMDRLAVGFSTHQRSAVLVRVDSASGLGDYLQLHIDQGTVGVIFNVGTDDITIDEPNAIVSDGKYHVVRFTRSGGNATLQVDSWPVNERYPAGNFDNERLAIARQRIPYRLGRVVDEWLLDKGRQLTIFNSQAAIKIGGRDQGRPFQGQVSGLYYNGLKVLALAAESDPNVRTEGHLRLVGEGPSVLLSAETTATTLLADMATTIMETTTTMATTTTRRGRSPTMRDSTTQNTDDLLVASAECPSDDEDLEECEPSTGGELILPIITEDSLDPPPVATRSPFVPPPPTFYPFLTGVGATQDTLPPPAARRPSSGGPCQAERDDSDCEEPVEASGFASGEVFDSSLPPTDDEDFYTTFPLVTDRTTLLSPRKPRPNLRTDGATGAPGVLFAPSAPAPNLPAGKMNHRDPLQPLLENPPLGPGVPTAFEPRRPPPLRPGVTSAPGFPRLPTANPTGPGERGPPGAVEVIRESSSTTGMVVGIVAAAALCILILLYAMYKYRNRDEGSYQVDQSRNYISNSAQSNGAVVKEKAPAAPKTPSKAKKNKDKEYYV.

Over residues 1–10 the composition is skewed to gly residues; that stretch reads MPPGGSGQGG. Positions 1–27 are disordered; the sequence is MPPGGSGQGGCPRRPPALAGPLPPPPP. Positions 1 to 46 are cleaved as a signal peptide; that stretch reads MPPGGSGQGGCPRRPPALAGPLPPPPPPPPLPLLLGLLLLLGAAEG. Over 47 to 584 the chain is Extracellular; sequence ARVSSSLSTT…EVIRESSSTT (538 aa). The Laminin G-like domain occupies 87 to 295; it reads TTYIFGKGGA…HLRLVGEGPS (209 aa). The Ca(2+) site is built by Asp139 and Val156. Asn186 carries N-linked (GlcNAc...) asparagine glycosylation. The Ca(2+) site is built by Ile238 and Asn240. An O-linked (Xyl...) (heparan sulfate) serine glycan is attached at Ser350. Disordered stretches follow at residues 408 to 458 and 537 to 571; these read ATQD…LPPT and EPRRPPPLRPGVTSAPGFPRLPTANPTGPGERGPP. N-linked (GlcNAc...) asparagine glycosylation occurs at Asn561. Residues 585–605 form a helical membrane-spanning segment; the sequence is GMVVGIVAAAALCILILLYAM. The Cytoplasmic segment spans residues 606–660; it reads YKYRNRDEGSYQVDQSRNYISNSAQSNGAVVKEKAPAAPKTPSKAKKNKDKEYYV. The segment at 627–660 is disordered; it reads NSAQSNGAVVKEKAPAAPKTPSKAKKNKDKEYYV.

This sequence belongs to the neurexin family. In terms of assembly, interacts (via cytoplasmic C-terminal region) with CASK. Specific isoforms bind alpha-dystroglycan and neuroligins NLGN1, NLGN2 and NLGN3. Interacts with CBLN1, CBLN2 and, less avidly, with CBLN4. Interacts with CLSTN3. Post-translationally, O-glycosylated; contains heparan sulfate. Heparan sulfate attachment is required for synapse development by mediating interactions with neuroligins.

It is found in the presynaptic cell membrane. Functionally, neuronal cell surface protein that may be involved in cell recognition and cell adhesion. The sequence is that of Neurexin-2-beta from Mus musculus (Mouse).